Reading from the N-terminus, the 361-residue chain is Protein RecA (361 aa).

Residue 77 to 84 coordinates ATP; it reads GPESSGKT.

Belongs to the RecA family.

Its subcellular location is the cytoplasm. Its function is as follows. Can catalyze the hydrolysis of ATP in the presence of single-stranded DNA, the ATP-dependent uptake of single-stranded DNA by duplex DNA, and the ATP-dependent hybridization of homologous single-stranded DNAs. It interacts with LexA causing its activation and leading to its autocatalytic cleavage. This chain is Protein RecA, found in Brucella suis (strain ATCC 23445 / NCTC 10510).